A 437-amino-acid chain; its full sequence is MAEKPHMNLVVIGHVDHGKSTLVGHLLYRLGYIEEKKLKELEEQAKSRGKESFKFAWILDKMKEERERGITIDLTFMKFETKKYVFTIIDAPGHRDFVKNMITGASQADAAILVVSARKGEFEAGMSTEGQTREHLLLARTMGIEQIIVAVNKMDAPDVNYDQKRYEFVVSVLKKFMKGLGYQVDKIPFIPVSAWKGDNLIERSPNMPWYNGPTLVEALDQLQPPAKPVDKPLRIPVQNVYSIPGAGTVPVGRVETGVLRVGDKVVFMPPGVVGEVRSIEMHYQQLQQAEPGDNIGFAVRGVSKSDIKRGDVAGHLDKPPTVAEEFEARIFVIWHPSAITVGYTPVIHVHTASVSSRIIEIKAKLDPKTGQVVEQNPQFLKAGDAAIVRFKPVKPLVVEKFSEIPQLGRFAMRDMNRTVGIGIVTDVKPAKVDIKAK.

Residues K4 to V229 form the tr-type G domain. The segment at G13–S20 is G1. G13–S20 is a GTP binding site. S20 contacts Mg(2+). Residues G69–D73 form a G2 region. Positions D90 to G93 are G3. Residues D90–H94 and N152–D155 each bind GTP. Residues N152–D155 form a G4 region. A G5 region spans residues S193 to W195.

This sequence belongs to the TRAFAC class translation factor GTPase superfamily. Classic translation factor GTPase family. EF-Tu/EF-1A subfamily.

It is found in the cytoplasm. The enzyme catalyses GTP + H2O = GDP + phosphate + H(+). In terms of biological role, GTP hydrolase that promotes the GTP-dependent binding of aminoacyl-tRNA to the A-site of ribosomes during protein biosynthesis. The polypeptide is Elongation factor 1-alpha (Aeropyrum pernix (strain ATCC 700893 / DSM 11879 / JCM 9820 / NBRC 100138 / K1)).